Here is a 373-residue protein sequence, read N- to C-terminus: LIM domain-binding protein 1 (373 aa).

Disordered stretches follow at residues 248–297 and 329–373; these read PPAE…LSSQ and DAAN…QASQ. Residues 266–282 show a composition bias toward low complexity; it reads SGGSTMSSGGGNTNNSN. Residues 288-297 are compositionally biased toward polar residues; the sequence is PASTFALSSQ. The LIM interaction domain (LID) domain occupies 298-337; that stretch reads DVMVVGEPTLMGGEFGDEDERLITRLENTQFDAANGIDDE.

It belongs to the LDB family. As to quaternary structure, forms homodimers and heterodimers. Interacts with and activates lhx1/lim1. The stoichiometry of lhx1/lim1 and ldb1 is important for their function and an excess of ldb1 can inhibit lhx1/lim1 function. When bound to lhx1/lim1, escapes degradation by rnf12. Interacts with the N-terminal region of rnf12. Post-translationally, undergoes rnf12-mediated ubiquitin-proteasome-dependent degradation.

The protein resides in the nucleus. In terms of biological role, binds to the LIM domain of a wide variety of LIM domain-containing transcription factors. Acts as a coactivator together with otx2 to stimulate lhx1/lim1-mediated activation of the gsc promoter in the Spemann organizer. Acts synergistically with lhx1/lim1 and ssbp in axis formation. In Xenopus tropicalis (Western clawed frog), this protein is LIM domain-binding protein 1.